The chain runs to 434 residues: Adenylosuccinate synthetase (434 aa).

Residues 25-31 and 53-55 contribute to the GTP site; these read GDEGKGK and GHT. Residue D26 is the Proton acceptor of the active site. Residues D26 and G53 each coordinate Mg(2+). IMP is bound by residues 26–29, 51–54, T142, R156, N233, T248, and R312; these read DEGK and NAGH. H54 (proton donor) is an active-site residue. Residue 308–314 coordinates substrate; it reads VTTGRKR. GTP-binding positions include R314, 340-342, and 422-424; these read KLD and GVG.

It belongs to the adenylosuccinate synthetase family. As to quaternary structure, homodimer. Mg(2+) serves as cofactor.

It localises to the cytoplasm. The catalysed reaction is IMP + L-aspartate + GTP = N(6)-(1,2-dicarboxyethyl)-AMP + GDP + phosphate + 2 H(+). It functions in the pathway purine metabolism; AMP biosynthesis via de novo pathway; AMP from IMP: step 1/2. Plays an important role in the de novo pathway and in the salvage pathway of purine nucleotide biosynthesis. Catalyzes the first committed step in the biosynthesis of AMP from IMP. This is Adenylosuccinate synthetase from Schizosaccharomyces japonicus (strain yFS275 / FY16936) (Fission yeast).